The chain runs to 361 residues: P2Y purinoceptor 4 (361 aa).

The disordered stretch occupies residues 1–20; it reads MTSAESLLFTSLGPSPSSGD. Over 1-30 the chain is Extracellular; sequence MTSAESLLFTSLGPSPSSGDGDCRFNEEFK. A helical transmembrane segment spans residues 31–58; it reads FILLPMSYAVVFVLGLALNAPTLWLFLF. Residues 59–68 are Cytoplasmic-facing; the sequence is RLRPWDATAT. Residues 69-91 form a helical membrane-spanning segment; sequence YMFHLALSDTLYVLSLPTLVYYY. Residues 92–108 are Extracellular-facing; sequence AARNHWPFGTGLCKFVR. A disulfide bridge connects residues Cys-104 and Cys-181. A helical membrane pass occupies residues 109 to 127; it reads FLFYWNLYCSVLFLTCISV. Over 128–149 the chain is Cytoplasmic; sequence HRYLGICHPLRAIRWGRPRFAS. A helical membrane pass occupies residues 150-170; the sequence is LLCLGVWLVVAGCLVPNLFFV. Over 171 to 192 the chain is Extracellular; sequence TTNANGTTILCHDTTLPEEFDH. A glycan (N-linked (GlcNAc...) asparagine) is linked at Asn-175. Residues 193-218 traverse the membrane as a helical segment; sequence YVYFSSAVMVLLFGLPFLITLVCYGL. Residues 219 to 242 lie on the Cytoplasmic side of the membrane; that stretch reads MARRLYRPLPGAGQSSSRLRSLRT. The helical transmembrane segment at 243-265 threads the bilayer; the sequence is IAVVLTVFAVCFVPFHITRTIYY. Residues 266 to 283 lie on the Extracellular side of the membrane; it reads QARLLQADCHVLNIVNVV. Residues 284–305 form a helical membrane-spanning segment; that stretch reads YKVTRPLASANSCLDPVLYLFT. The Cytoplasmic segment spans residues 306-361; it reads GDKYRNQLQQLCRGSKPKPRTAASSLALVTLHEESISRWADTHQDSTFSAYEGDRL.

This sequence belongs to the G-protein coupled receptor 1 family. In terms of processing, phosphorylation of Ser-329 and Ser-330 is a key step in agonist-dependent desensitization and loss of surface P2RY4. This phosphorylation does not involve PKC, nor other calcium-activated kinases. In terms of tissue distribution, widely expressed at low levels. In brain, higher expression in the pineal gland and ventricular system.

The protein resides in the cell membrane. Functionally, receptor for ATP and UTP coupled to G-proteins that activate a phosphatidylinositol-calcium second messenger system. Not activated by ADP or UDP. The chain is P2Y purinoceptor 4 (P2ry4) from Rattus norvegicus (Rat).